We begin with the raw amino-acid sequence, 179 residues long: uncharacterized protein (179 aa).

The tract at residues 1-32 (MELQGAQEDLGISLSSPRRNHETRPGSKAKGR) is disordered.

This is an uncharacterized protein from Homo sapiens (Human).